The following is a 338-amino-acid chain: Legumin B (338 aa).

The interval 16–162 is disordered; sequence SLNTKEDTAK…RQHSKGRKNG (147 aa). Basic and acidic residues predominate over residues 18 to 44; it reads NTKEDTAKRLRSPQDERGQIVKVEDGL. 2 stretches are compositionally biased toward acidic residues: residues 82–92 and 136–150; these read DEDEDEEEEEE and EEEE…EEEE. One can recognise a Cupin type-1 domain in the interval 174–321; sequence ENIARPSRGD…AFGLRHSQVA (148 aa).

Belongs to the 11S seed storage protein (globulins) family. Hexamer; each subunit is composed of an acidic and a basic chain derived from a single precursor and linked by a disulfide bond.

Functionally, this protein found in the seeds of many leguminous and non-leguminous plants is the source of sulfur-containing amino acids in seed meals. The protein is Legumin B (LEGB) of Pisum sativum (Garden pea).